Here is an 83-residue protein sequence, read N- to C-terminus: Short neurotoxin D (83 aa).

Positions 1-21 are cleaved as a signal peptide; the sequence is MKTLLLTLVVVTMVCLDLGYT. 4 cysteine pairs are disulfide-bonded: Cys24–Cys45, Cys38–Cys62, Cys64–Cys75, and Cys76–Cys81.

This sequence belongs to the three-finger toxin family. Short-chain subfamily. Type I alpha-neurotoxin sub-subfamily. As to expression, expressed by the venom gland.

Its subcellular location is the secreted. Functionally, binds to muscle nicotinic acetylcholine receptor (nAChR) and inhibit acetylcholine from binding to the receptor, thereby impairing neuromuscular transmission. The protein is Short neurotoxin D of Laticauda colubrina (Yellow-lipped sea krait).